Consider the following 438-residue polypeptide: Xylose isomerase (438 aa).

Residues histidine 100 and aspartate 103 contribute to the active site. Glutamate 231, glutamate 267, histidine 270, aspartate 295, aspartate 306, aspartate 308, and aspartate 338 together coordinate Mg(2+).

This sequence belongs to the xylose isomerase family. In terms of assembly, homotetramer. It depends on Mg(2+) as a cofactor.

It is found in the cytoplasm. It catalyses the reaction alpha-D-xylose = alpha-D-xylulofuranose. This Caldanaerobacter subterraneus subsp. yonseiensis (Thermoanaerobacter yonseiensis) protein is Xylose isomerase.